Here is a 699-residue protein sequence, read N- to C-terminus: MTAQLQSESTSKIVLVTGGAGYIGSHTVVELIENGYDCVVADNLSNSTYDSVARLEVLTKHHIPFYEVDLCDRKGLEKVFKEYKIDSVIHFAGLKAVGESTQIPLRYYHNNILGTVVLLELMQQYNVSKFVFSSSATVYGDATRFPNMIPIPEECPLGPTNPYGHTKYAIENILNDLYNSDKKSWKFAILRYFNPIGAHPSGLIGEDPLGIPNNLLPYMAQVAVGRREKLYIFGDDYDSRDGTPIRDYIHVVDLAKGHIAALQYLEAYNENEGLCREWNLGSGKGSTVFEVYHAFCKASGIDLPYKVTGRRAGDVLNLTAKPDRAKRELKWQTELQVEDSCKDLWKWTTENPFGYQLRGVEARFSAEDMRYDARFVTIGAGTRFQATFANLGASIVDLKVNGQSVVLGYENEEGYLNPDSAYIGATIGRYANRISKGKFSLCNKDYQLTVNNGVNANHSSIGSFHRKRFLGPIIQNPSKDVFTAEYMLIDNEKDTEFPGDLLVTIQYTVNVAQKSLEMVYKGKLTAGEATPINLTNHSYFNLNKPYGDTIEGTEIMVRSKKSVDVDKNMIPTGNIVDREIATFNSTKPTVLGPKNPQFDCCFVVDENAKPSQINTLNNELTLIVKAFHPDSNITLEVLSTEPTYQFYTGDFLSAGYEARQGFAIEPGRYIDAINQENWKDCVTLKNGETYGSKIVYRFS.

Residues 1-357 form a galactowaldenase region; that stretch reads MTAQLQSEST…TTENPFGYQL (357 aa). 13–44 contributes to the NAD(+) binding site; it reads IVLVTGGAGYIGSHTVVELIENGYDCVVADNL. A mutarotase region spans residues 358–699; that stretch reads RGVEARFSAE…YGSKIVYRFS (342 aa). Catalysis depends on H537, which acts as the For mutarotase activity. The residue at position 562 (S562) is a Phosphoserine.

This sequence in the N-terminal section; belongs to the NAD(P)-dependent epimerase/dehydratase family. It in the C-terminal section; belongs to the aldose epimerase family. NAD(+) is required as a cofactor.

It carries out the reaction UDP-alpha-D-glucose = UDP-alpha-D-galactose. The catalysed reaction is alpha-D-glucose = beta-D-glucose. It functions in the pathway carbohydrate metabolism; galactose metabolism. It participates in carbohydrate metabolism; hexose metabolism. Its function is as follows. Mutarotase converts alpha-aldose to the beta-anomer. It is active on D-glucose, L-arabinose, D-xylose, D-galactose, maltose and lactose. The protein is Bifunctional protein GAL10 (GAL10) of Saccharomyces cerevisiae (strain ATCC 204508 / S288c) (Baker's yeast).